A 367-amino-acid chain; its full sequence is Putative F-box protein At3g21130 (367 aa).

Residues 4–50 (KRNTVYLSEDLIVEILSRVSAVSLARLRTTSKRWNALVKDERLAKKH) form the F-box domain.

The polypeptide is Putative F-box protein At3g21130 (Arabidopsis thaliana (Mouse-ear cress)).